A 332-amino-acid polypeptide reads, in one-letter code: Phosphate acyltransferase (332 aa).

Belongs to the PlsX family. Homodimer. Probably interacts with PlsY.

It localises to the cytoplasm. The catalysed reaction is a fatty acyl-[ACP] + phosphate = an acyl phosphate + holo-[ACP]. It functions in the pathway lipid metabolism; phospholipid metabolism. Catalyzes the reversible formation of acyl-phosphate (acyl-PO(4)) from acyl-[acyl-carrier-protein] (acyl-ACP). This enzyme utilizes acyl-ACP as fatty acyl donor, but not acyl-CoA. This chain is Phosphate acyltransferase, found in Nitratiruptor sp. (strain SB155-2).